The primary structure comprises 437 residues: Histidine--tRNA ligase (437 aa).

It belongs to the class-II aminoacyl-tRNA synthetase family. As to quaternary structure, homodimer.

The protein resides in the cytoplasm. The enzyme catalyses tRNA(His) + L-histidine + ATP = L-histidyl-tRNA(His) + AMP + diphosphate + H(+). This chain is Histidine--tRNA ligase, found in Opitutus terrae (strain DSM 11246 / JCM 15787 / PB90-1).